Here is a 208-residue protein sequence, read N- to C-terminus: Imidazoleglycerol-phosphate dehydratase (208 aa).

It belongs to the imidazoleglycerol-phosphate dehydratase family.

It carries out the reaction D-erythro-1-(imidazol-4-yl)glycerol 3-phosphate = 3-(imidazol-4-yl)-2-oxopropyl phosphate + H2O. Its pathway is amino-acid biosynthesis; L-histidine biosynthesis; L-histidine from 5-phospho-alpha-D-ribose 1-diphosphate: step 6/9. This chain is Imidazoleglycerol-phosphate dehydratase (his3), found in Trichoderma harzianum (Hypocrea lixii).